A 108-amino-acid chain; its full sequence is Parvalbumin beta (108 aa).

Position 1 is an N-acetylalanine (alanine 1). Cysteines 11 and 33 form a disulfide. EF-hand domains lie at 38-73 (KSAD…FKAG) and 77-108 (LTDA…LVKA). Ca(2+) contacts are provided by aspartate 51, aspartate 53, serine 55, phenylalanine 57, glutamate 59, glutamate 62, aspartate 90, aspartate 92, aspartate 94, alanine 96, and glutamate 101.

The protein belongs to the parvalbumin family.

In muscle, parvalbumin is thought to be involved in relaxation after contraction. It binds two calcium ions. This Merlangius merlangus (Whiting) protein is Parvalbumin beta.